The primary structure comprises 574 residues: Probable E3 ubiquitin-protein ligase ipaH4.5 (574 aa).

The interval 1–284 (MKPINNHSFF…YHGPQIYFSM (284 aa)) is interaction with target proteins. 10 LRR repeats span residues 63-82 (REPVLNLSLLKLRSLPPLPL), 83-104 (HIRELNISNNELISLPENSPLL), 105-122 (TELHVNGNNLNILPTLPS), 123-143 (QLIKLNISFNRNLSCLPSLPP), 144-165 (YLQSLSARFNSLETLPELPSTL), 166-183 (TILRIEGNRLTVLPELPH), 184-205 (RLQELFVSGNRLQELPEFPQSL), 206-223 (KYLKVGENQLRRLSRLPQ), 224-246 (ELLALDVSNNLLTSLPENIITLP), and 247-270 (ICTNVNISGNPLSTHVLQSLQRLT). Residues 285–292 (SDGQQNTL) are linker. Residues 293-574 (HRPLADAVTA…YRQLTDEVLA (282 aa)) form an E3 ubiquitin-protein ligase catalytic domain region. The NEL domain occupies 295 to 574 (PLADAVTAWF…YRQLTDEVLA (280 aa)). The active-site Glycyl thioester intermediate is the Cys-379.

The protein belongs to the LRR-containing bacterial E3 ligase family. Ubiquitinated in the presence of host E1 ubiquitin-activating enzyme, E2 ubiquitin-conjugating enzyme and ubiquitin.

It is found in the secreted. Its subcellular location is the host cytoplasm. It carries out the reaction S-ubiquitinyl-[E2 ubiquitin-conjugating enzyme]-L-cysteine + [acceptor protein]-L-lysine = [E2 ubiquitin-conjugating enzyme]-L-cysteine + N(6)-ubiquitinyl-[acceptor protein]-L-lysine.. Functionally, effector proteins function to alter host cell physiology and promote bacterial survival in host tissues. This protein is an E3 ubiquitin ligase that interferes with host's ubiquitination pathway. The chain is Probable E3 ubiquitin-protein ligase ipaH4.5 (ipaH4.5) from Shigella flexneri.